Consider the following 408-residue polypeptide: uncharacterized protein (408 aa).

4Fe-4S ferredoxin-type domains are found at residues isoleucine 42–asparagine 72, lysine 78–histidine 107, serine 122–glycine 151, glycine 151–glutamate 181, lysine 212–lysine 241, glycine 233–proline 265, isoleucine 273–glutamate 302, and lysine 304–proline 333. Positions 52, 55, 58, 62, 87, 90, 93, 97, 131, 134, 137, 141, 160, 163, 166, and 170 each coordinate [4Fe-4S] cluster. Residues cysteine 282, cysteine 285, cysteine 288, and cysteine 292 each coordinate [4Fe-4S] cluster.

This is an uncharacterized protein from Methanocaldococcus jannaschii (strain ATCC 43067 / DSM 2661 / JAL-1 / JCM 10045 / NBRC 100440) (Methanococcus jannaschii).